We begin with the raw amino-acid sequence, 119 residues long: uncharacterized protein (119 aa).

2 helical membrane-spanning segments follow: residues 57–77 (FSHH…SILF) and 80–100 (YIFV…FILH).

The protein localises to the membrane. This is an uncharacterized protein from Saccharomyces cerevisiae (strain ATCC 204508 / S288c) (Baker's yeast).